We begin with the raw amino-acid sequence, 531 residues long: T-complex protein 1 subunit zeta (531 aa).

N-acetylalanine is present on Ala2. N6-acetyllysine is present on Lys5. Gly39 serves as a coordination point for ADP. Gly39 serves as a coordination point for ATP. Residue Asp90 participates in Mg(2+) binding. Residues Gly91, Thr92, Thr93, Ser94, Thr158, and Lys159 each coordinate ADP. ATP contacts are provided by Gly91, Thr92, and Thr93. Residue Lys199 is modified to N6-acetyllysine. At Ser205 the chain carries Phosphoserine. A Glycyl lysine isopeptide (Lys-Gly) (interchain with G-Cter in SUMO2) cross-link involves residue Lys251. An N6-acetyllysine mark is found at Lys287, Lys365, Lys377, and Lys388. Ala411 serves as a coordination point for ADP. Residues Ala411, Gly412, Asp496, and Lys501 each contribute to the ATP site. Asp496 contributes to the ADP binding site.

Belongs to the TCP-1 chaperonin family. As to quaternary structure, component of the chaperonin-containing T-complex (TRiC), a hexadecamer composed of two identical back-to-back stacked rings enclosing a protein folding chamber. Each ring is made up of eight different subunits: TCP1/CCT1, CCT2, CCT3, CCT4, CCT5, CCT6A/CCT6, CCT7, CCT8. Interacts with PACRG.

The protein resides in the cytoplasm. The catalysed reaction is ATP + H2O = ADP + phosphate + H(+). In terms of biological role, component of the chaperonin-containing T-complex (TRiC), a molecular chaperone complex that assists the folding of actin, tubulin and other proteins upon ATP hydrolysis. The TRiC complex mediates the folding of WRAP53/TCAB1, thereby regulating telomere maintenance. The sequence is that of T-complex protein 1 subunit zeta (CCT6A) from Homo sapiens (Human).